The following is a 313-amino-acid chain: Ribosomal RNA small subunit methyltransferase H (313 aa).

S-adenosyl-L-methionine contacts are provided by residues 35 to 37 (GGH), Asp55, Phe79, Asp100, and Gln107.

Belongs to the methyltransferase superfamily. RsmH family.

The protein resides in the cytoplasm. It carries out the reaction cytidine(1402) in 16S rRNA + S-adenosyl-L-methionine = N(4)-methylcytidine(1402) in 16S rRNA + S-adenosyl-L-homocysteine + H(+). Specifically methylates the N4 position of cytidine in position 1402 (C1402) of 16S rRNA. In Burkholderia multivorans (strain ATCC 17616 / 249), this protein is Ribosomal RNA small subunit methyltransferase H.